A 148-amino-acid polypeptide reads, in one-letter code: Ribonuclease pancreatic (148 aa).

Residues Met1–Gly25 form the signal peptide. Residues Lys32 and Arg35 each contribute to the substrate site. The active-site Proton acceptor is His37. 4 cysteine pairs are disulfide-bonded: Cys50/Cys108, Cys64/Cys119, Cys82/Cys134, and Cys89/Cys96. An N-linked (GlcNAc...) asparagine glycan is attached at Asn58. Lys65 to Thr69 contacts substrate. A glycan (N-linked (GlcNAc...) asparagine) is linked at Asn86. Substrate contacts are provided by Lys90 and Arg109. Catalysis depends on His143, which acts as the Proton donor.

The protein belongs to the pancreatic ribonuclease family. As to quaternary structure, monomer. Interacts with and forms tight 1:1 complexes with RNH1. Dimerization of two such complexes may occur. Interaction with RNH1 inhibits this protein. Pancreas.

Its subcellular location is the secreted. The enzyme catalyses an [RNA] containing cytidine + H2O = an [RNA]-3'-cytidine-3'-phosphate + a 5'-hydroxy-ribonucleotide-3'-[RNA].. It catalyses the reaction an [RNA] containing uridine + H2O = an [RNA]-3'-uridine-3'-phosphate + a 5'-hydroxy-ribonucleotide-3'-[RNA].. Functionally, endonuclease that catalyzes the cleavage of RNA on the 3' side of pyrimidine nucleotides. Acts on single-stranded and double-stranded RNA. This is Ribonuclease pancreatic (RNASE1) from Myodes glareolus (Bank vole).